The following is a 155-amino-acid chain: Ribosomal RNA large subunit methyltransferase H (155 aa).

S-adenosyl-L-methionine-binding positions include L72, G103, and 122–127; that span reads LSALTL.

It belongs to the RNA methyltransferase RlmH family. In terms of assembly, homodimer.

It localises to the cytoplasm. It carries out the reaction pseudouridine(1915) in 23S rRNA + S-adenosyl-L-methionine = N(3)-methylpseudouridine(1915) in 23S rRNA + S-adenosyl-L-homocysteine + H(+). Its function is as follows. Specifically methylates the pseudouridine at position 1915 (m3Psi1915) in 23S rRNA. This chain is Ribosomal RNA large subunit methyltransferase H, found in Citrobacter koseri (strain ATCC BAA-895 / CDC 4225-83 / SGSC4696).